The sequence spans 329 residues: tRNA uridine(34) hydroxylase (329 aa).

The Rhodanese domain occupies 123–217; that stretch reads SDPETVLIDT…YLEEVPKEKS (95 aa). Catalysis depends on C177, which acts as the Cysteine persulfide intermediate. Residues 310 to 329 form a disordered region; that stretch reads LNKQKKQQAKEAARKKTEKN. The segment covering 317–329 has biased composition (basic and acidic residues); sequence QAKEAARKKTEKN.

This sequence belongs to the TrhO family.

It carries out the reaction uridine(34) in tRNA + AH2 + O2 = 5-hydroxyuridine(34) in tRNA + A + H2O. Functionally, catalyzes oxygen-dependent 5-hydroxyuridine (ho5U) modification at position 34 in tRNAs. This Francisella tularensis subsp. novicida (strain U112) protein is tRNA uridine(34) hydroxylase.